A 360-amino-acid chain; its full sequence is Archaemetzincin-2 (360 aa).

His254 contributes to the Zn(2+) binding site. The Proton acceptor role is filled by Glu255. 6 residues coordinate Zn(2+): His258, His264, Cys265, Cys270, Cys289, and Cys292.

It belongs to the peptidase M54 family. Zn(2+) serves as cofactor.

Functionally, probable zinc metalloprotease. This Macaca fascicularis (Crab-eating macaque) protein is Archaemetzincin-2 (AMZ2).